We begin with the raw amino-acid sequence, 174 residues long: Putative NADH dehydrogenase/NAD(P)H nitroreductase AF_2267 (174 aa).

107-112 (AARCLG) contributes to the NAD(+) binding site.

The protein belongs to the nitroreductase family. It depends on FMN as a cofactor.

The sequence is that of Putative NADH dehydrogenase/NAD(P)H nitroreductase AF_2267 from Archaeoglobus fulgidus (strain ATCC 49558 / DSM 4304 / JCM 9628 / NBRC 100126 / VC-16).